The primary structure comprises 401 residues: Ureide permease 4 (401 aa).

At 1 to 10 (MYVVESKAGA) the chain is on the extracellular side. A helical membrane pass occupies residues 11 to 31 (IGCMILSLCCLGSWPAILTLL). The Cytoplasmic segment spans residues 32–40 (ERRGRLPQH). Residues 41–61 (TFLDFATANLLAAIVIAFSLG) form a helical membrane-spanning segment. At 62–81 (EIGKSTFLKPDFTTQLPQDN) the chain is on the extracellular side. Residues 82–102 (WPSVLLAVAGGVLLSIGNLAT) form a helical membrane-spanning segment. Residues 103–104 (QY) lie on the Cytoplasmic side of the membrane. A helical membrane pass occupies residues 105 to 125 (AFAFVGLSVTEVITASITVVI). At 126-141 (GTTLNYFLDNKINKAE) the chain is on the extracellular side. Residues 142–162 (ILFPGVGCFLIAVFLGAAVHA) form a helical membrane-spanning segment. Residues 163 to 231 (SNAADVKEKL…KRAIKVFGKS (69 aa)) are Cytoplasmic-facing. Residue 224 to 231 (AIKVFGKS) participates in ATP binding. A helical transmembrane segment spans residues 232 to 252 (IMIGLFITLFAGISLSLFSPA). Topologically, residues 253–275 (FNLATNDQWSTLPKGVPKLVVYT) are extracellular. Residues 276–296 (AFFYFSIAGFLISLILNLIFL) traverse the membrane as a helical segment. Topologically, residues 297–318 (YRPMVGLARSSLKKYIYDSKGR) are cytoplasmic. Residues 319-339 (GWAVFAGFLCGFGNGLQFMGG) form a helical membrane-spanning segment. Residues 340 to 344 (QAAGY) are Extracellular-facing. Residues 345–365 (AAADSVQALPLVSTFWGIVLF) traverse the membrane as a helical segment. The Cytoplasmic portion of the chain corresponds to 366 to 374 (GEYRKSSKR). A helical membrane pass occupies residues 375-395 (TYALLVSMLAMFVAAVAILMA). Over 396 to 401 (SSGHRK) the chain is Extracellular.

This sequence belongs to the plant ureide permease (TC 2.A.7.19) family. As to expression, expressed in developing seedlings, flower filaments and stigma, and the top and bottom parts of carpels in siliques.

It localises to the membrane. Functionally, proton-coupled transporter that transports a wide spectrum of oxo derivatives of heterocyclic nitrogen compounds. This Arabidopsis thaliana (Mouse-ear cress) protein is Ureide permease 4.